The chain runs to 388 residues: S-adenosylmethionine synthase (388 aa).

His-17 contacts ATP. Asp-19 contacts Mg(2+). A K(+)-binding site is contributed by Glu-45. L-methionine contacts are provided by Glu-58 and Gln-106. Residues 106–116 (QSAHISQGVDR) form a flexible loop region. Residues 166–168 (DAK), Asp-241, 247–248 (RK), Ala-264, and Lys-268 contribute to the ATP site. Asp-241 serves as a coordination point for L-methionine. Lys-272 contacts L-methionine.

This sequence belongs to the AdoMet synthase family. As to quaternary structure, homotetramer; dimer of dimers. The cofactor is Mg(2+). K(+) is required as a cofactor.

The protein localises to the cytoplasm. The catalysed reaction is L-methionine + ATP + H2O = S-adenosyl-L-methionine + phosphate + diphosphate. It functions in the pathway amino-acid biosynthesis; S-adenosyl-L-methionine biosynthesis; S-adenosyl-L-methionine from L-methionine: step 1/1. In terms of biological role, catalyzes the formation of S-adenosylmethionine (AdoMet) from methionine and ATP. The overall synthetic reaction is composed of two sequential steps, AdoMet formation and the subsequent tripolyphosphate hydrolysis which occurs prior to release of AdoMet from the enzyme. The sequence is that of S-adenosylmethionine synthase from Paracoccus denitrificans (strain Pd 1222).